Consider the following 552-residue polypeptide: Cation/acetate symporter ActP (552 aa).

14 helical membrane-spanning segments follow: residues 5 to 25, 35 to 55, 78 to 98, 105 to 125, 151 to 171, 185 to 205, 208 to 228, 264 to 284, 305 to 325, 357 to 377, 407 to 427, 431 to 451, 466 to 486, and 499 to 519; these read FMML…DALT, IQAI…TYWA, GLAI…SALV, GLIY…LIAE, LSAC…MVGA, VAVI…GMLA, WVQI…AVMV, ISAL…PHIL, GFMG…ILLV, FFLG…VAGL, VSKI…ILFE, IAFM…PIII, IGGW…PTIW, and YDYP…FFSI.

Belongs to the sodium:solute symporter (SSF) (TC 2.A.21) family.

The protein resides in the cell inner membrane. In terms of biological role, transports acetate. The chain is Cation/acetate symporter ActP from Pectobacterium carotovorum subsp. carotovorum (strain PC1).